Consider the following 59-residue polypeptide: Large ribosomal subunit protein bL32 (59 aa).

The disordered stretch occupies residues 1-59 (MAVQQNKKSPSKRGMHRAHDFLTAPVIAIEPSTGEAHRRHHISPNGFYRGRKVVKGKDE). A compositionally biased stretch (basic residues) spans 49–59 (RGRKVVKGKDE).

It belongs to the bacterial ribosomal protein bL32 family.

This Laribacter hongkongensis (strain HLHK9) protein is Large ribosomal subunit protein bL32.